A 326-amino-acid polypeptide reads, in one-letter code: Vitamin B12 import system permease protein BtuC (326 aa).

A run of 9 helical transmembrane segments spans residues 15–35 (WLLS…CAGE), 61–81 (LAVL…QALF), 88–108 (PGLL…VLLG), 112–132 (LPGW…TLIL), 146–166 (LLAG…AIYF), 184–204 (GGVD…LIWI), 240–260 (GWMV…GLVI), 274–294 (VLLP…DVVA), and 302–322 (ELPI…WLLL).

Belongs to the binding-protein-dependent transport system permease family. FecCD subfamily. As to quaternary structure, the complex is composed of two ATP-binding proteins (BtuD), two transmembrane proteins (BtuC) and a solute-binding protein (BtuF).

Its subcellular location is the cell inner membrane. Functionally, part of the ABC transporter complex BtuCDF involved in vitamin B12 import. Involved in the translocation of the substrate across the membrane. The chain is Vitamin B12 import system permease protein BtuC from Salmonella enteritidis PT4 (strain P125109).